A 327-amino-acid chain; its full sequence is Methionyl-tRNA formyltransferase (327 aa).

(6S)-5,6,7,8-tetrahydrofolate is bound at residue 121–124 (SLLP).

The protein belongs to the Fmt family.

It catalyses the reaction L-methionyl-tRNA(fMet) + (6R)-10-formyltetrahydrofolate = N-formyl-L-methionyl-tRNA(fMet) + (6S)-5,6,7,8-tetrahydrofolate + H(+). Its function is as follows. Attaches a formyl group to the free amino group of methionyl-tRNA(fMet). The formyl group appears to play a dual role in the initiator identity of N-formylmethionyl-tRNA by promoting its recognition by IF2 and preventing the misappropriation of this tRNA by the elongation apparatus. This Burkholderia pseudomallei (strain K96243) protein is Methionyl-tRNA formyltransferase.